Here is a 539-residue protein sequence, read N- to C-terminus: MAKDPGRVLIFDTTLRDGEQSPGASLNLEEKLAIAQQLARLGVDVIEAGFPFASPGDFAAVQKIAENVGGEEGPIICGLSRASKPDIKACANAIAPAPKKRIHTFIATSDIHLEHKLRKSRKEVLDIVPDMVGYAKSFVDDVEFSCEDAARSDLDFLYEVIELAISSGANTINIPDTVGYITPSEFGDLILNINKNVPNINEAVLSVHGHNDLGLAVANFLEAVKNGARQLECTINGIGERAGNAALEELIMALHVRRSYFNPFFGRPPESPTPLTAVRTEEITKSSRLVSNLTGMVVQPNKAIVGANAFAHESGIHQDGVLKNRLTYEIIDAKTVGLSDNKISLGKLSGRSAVRARLEDLGYDLNREDLNDAFARFKDLADRKREITDRDLEAIVSEQVQLPEALFQLKLVQVSCGTSLMPTATVTVVGEDGEEKTAVSLGTGPVDAVVRALDSLTEEPNELIEFSVKSVTEGIDALGEVTIRIRRDGNLFSGHSADTDVVVAAAQAYINALNRLVAAHGRKSIHPQHDLAKVEKKGI.

Positions 8–269 (VLIFDTTLRD…YFNPFFGRPP (262 aa)) constitute a Pyruvate carboxyltransferase domain. Mn(2+) is bound by residues Asp-17, His-208, His-210, and Asn-244. Residues 408 to 539 (QLKLVQVSCG…DLAKVEKKGI (132 aa)) form a regulatory domain region.

Belongs to the alpha-IPM synthase/homocitrate synthase family. LeuA type 1 subfamily. In terms of assembly, homodimer. The cofactor is Mn(2+).

The protein localises to the cytoplasm. It catalyses the reaction 3-methyl-2-oxobutanoate + acetyl-CoA + H2O = (2S)-2-isopropylmalate + CoA + H(+). Its pathway is amino-acid biosynthesis; L-leucine biosynthesis; L-leucine from 3-methyl-2-oxobutanoate: step 1/4. Its function is as follows. Catalyzes the condensation of the acetyl group of acetyl-CoA with 3-methyl-2-oxobutanoate (2-ketoisovalerate) to form 3-carboxy-3-hydroxy-4-methylpentanoate (2-isopropylmalate). The sequence is that of 2-isopropylmalate synthase from Prochlorococcus marinus (strain NATL2A).